The chain runs to 70 residues: Eglin C (70 aa).

Belongs to the protease inhibitor I13 (potato type I serine protease inhibitor) family.

In terms of biological role, inhibits both elastase and cathepsin G. The polypeptide is Eglin C (Hirudo medicinalis (Medicinal leech)).